A 95-amino-acid polypeptide reads, in one-letter code: Large ribosomal subunit protein bL28 (95 aa).

The protein belongs to the bacterial ribosomal protein bL28 family.

The sequence is that of Large ribosomal subunit protein bL28 from Orientia tsutsugamushi (strain Ikeda) (Rickettsia tsutsugamushi).